Consider the following 70-residue polypeptide: Large ribosomal subunit protein bL31 (70 aa).

Zn(2+) contacts are provided by Cys16, Cys18, Cys38, and Cys41.

It belongs to the bacterial ribosomal protein bL31 family. Type A subfamily. In terms of assembly, part of the 50S ribosomal subunit. The cofactor is Zn(2+).

Binds the 23S rRNA. This chain is Large ribosomal subunit protein bL31, found in Saccharopolyspora erythraea (strain ATCC 11635 / DSM 40517 / JCM 4748 / NBRC 13426 / NCIMB 8594 / NRRL 2338).